Reading from the N-terminus, the 315-residue chain is Serpentine receptor class delta-31 (315 aa).

Transmembrane regions (helical) follow at residues Leu-6–Ile-26, Ala-38–Met-58, Ala-83–Ile-103, Val-124–Ile-144, Ile-174–Ile-194, Phe-225–Thr-245, and Ala-256–Val-276.

Belongs to the nematode receptor-like protein srd family.

It localises to the membrane. This chain is Serpentine receptor class delta-31 (srd-31), found in Caenorhabditis elegans.